The primary structure comprises 860 residues: DNA mismatch repair protein MutS (860 aa).

Position 606-613 (606-613 (GPNMSGKS)) interacts with ATP.

It belongs to the DNA mismatch repair MutS family.

Functionally, this protein is involved in the repair of mismatches in DNA. It is possible that it carries out the mismatch recognition step. This protein has a weak ATPase activity. The sequence is that of DNA mismatch repair protein MutS from Geobacillus sp. (strain WCH70).